A 231-amino-acid polypeptide reads, in one-letter code: Cytidylate kinase 1 (231 aa).

Position 7 to 15 (7 to 15) interacts with ATP; the sequence is GPSGAGKGT.

This sequence belongs to the cytidylate kinase family. Type 1 subfamily.

It is found in the cytoplasm. It carries out the reaction CMP + ATP = CDP + ADP. It catalyses the reaction dCMP + ATP = dCDP + ADP. The polypeptide is Cytidylate kinase 1 (Haemophilus influenzae (strain ATCC 51907 / DSM 11121 / KW20 / Rd)).